The primary structure comprises 865 residues: DNA topoisomerase 1 (865 aa).

In terms of domain architecture, Toprim spans 3 to 142 (KALVIVESPA…RYSRVVFNEI (140 aa)). Position 9 (E9) interacts with Mg(2+). Positions 37-65 (LPTSGSAAKKSADSTSTKTAKKPKKDERG) are disordered. The span at 39 to 54 (TSGSAAKKSADSTSTK) shows a compositional bias: low complexity. Position 111 (D111) interacts with Mg(2+). A Topo IA-type catalytic domain is found at 158–575 (NIDRVNAQQA…HFFSDFTQQL (418 aa)). The interaction with DNA stretch occupies residues 192–197 (SAGRVQ). The O-(5'-phospho-DNA)-tyrosine intermediate role is filled by Y319. C4-type zinc fingers lie at residues 599-630 (CPTC…KERC), 662-689 (CPKC…NPTC), and 711-736 (CEKC…NEEC).

Belongs to the type IA topoisomerase family. As to quaternary structure, monomer. It depends on Mn(2+) as a cofactor. The cofactor is Ca(2+).

The enzyme catalyses ATP-independent breakage of single-stranded DNA, followed by passage and rejoining.. Releases the supercoiling and torsional tension of DNA, which is introduced during the DNA replication and transcription, by transiently cleaving and rejoining one strand of the DNA duplex. Introduces a single-strand break via transesterification at a target site in duplex DNA. The scissile phosphodiester is attacked by the catalytic tyrosine of the enzyme, resulting in the formation of a DNA-(5'-phosphotyrosyl)-enzyme intermediate and the expulsion of a 3'-OH DNA strand. The free DNA strand then undergoes passage around the unbroken strand, thus removing DNA supercoils. Finally, in the religation step, the DNA 3'-OH attacks the covalent intermediate to expel the active-site tyrosine and restore the DNA phosphodiester backbone. The protein is DNA topoisomerase 1 of Escherichia coli (strain K12).